Reading from the N-terminus, the 469-residue chain is Solute carrier family 52, riboflavin transporter, member 3 (469 aa).

Residues 1–6 (MALLTH) lie on the Cytoplasmic side of the membrane. The helical transmembrane segment at 7-27 (LLVCTFGMGSWVAINGLWVEL) threads the bilayer. Residues 28–43 (PLLVTELPEGWYLPSY) are Extracellular-facing. The helical transmembrane segment at 44–64 (LTMVIQLANIGPLLVTLLHHF) threads the bilayer. The Cytoplasmic portion of the chain corresponds to 65–71 (QPSCLSE). A helical membrane pass occupies residues 72–92 (VPIIFTVLAVGTVACALFAFL). Residues 93–105 (WNVTSWVLDGRHS) are Extracellular-facing. A glycan (N-linked (GlcNAc...) asparagine) is linked at N94. The chain crosses the membrane as a helical span at residues 106–126 (IAFMVLTFFLALVDCTSSVTF). Residues 127–137 (LPFMSRLPACY) are Cytoplasmic-facing. Residues 138-158 (LTTFFVGEGLSSLLPALVALA) traverse the membrane as a helical segment. Topologically, residues 159-220 (QGSGLTTCVN…SRYLPANFSP (62 aa)) are extracellular. N168 carries N-linked (GlcNAc...) asparagine glycosylation. A helical transmembrane segment spans residues 221–241 (LVFFLLLSFMMACCLAAFFLL). Over 242–297 (QRQPRPRESSIEDLLTSQVTLHSIRPREGDDLGPPDPGPSSKAQGLPEEKTASDHP) the chain is Cytoplasmic. Position 251 is a phosphoserine (S251). The segment at 266–290 (RPREGDDLGPPDPGPSSKAQGLPEE) is disordered. Residues 298–318 (AHLAFIYVLVAFVNALTNGVL) form a helical membrane-spanning segment. Over 319–335 (PSVQTYSCLSYGPVAYH) the chain is Extracellular. The helical transmembrane segment at 336–356 (LSATLSSMANPLACFLSMFLP) threads the bilayer. Residues 357-361 (HRSLP) are Cytoplasmic-facing. The chain crosses the membrane as a helical span at residues 362 to 382 (FLGVLTVLGTGFGAYNMAMAV). Over 383–396 (MSPCPLMQGHWAGE) the chain is Extracellular. The helical transmembrane segment at 397 to 417 (ILIVASWVLFIGCLSYVKVML) threads the bilayer. Residues 418 to 427 (GVILRDRSRS) lie on the Cytoplasmic side of the membrane. A helical transmembrane segment spans residues 428-448 (ALVWCGAAVQLGSLLGALLMF). The Extracellular segment spans residues 449-469 (PLVNVLRLFSSADFCSLQCSA).

It belongs to the riboflavin transporter family.

The protein localises to the cell membrane. It catalyses the reaction riboflavin(in) = riboflavin(out). Its function is as follows. Plasma membrane transporter mediating the uptake by cells of the water soluble vitamin B2/riboflavin that plays a key role in biochemical oxidation-reduction reactions of the carbohydrate, lipid, and amino acid metabolism. The chain is Solute carrier family 52, riboflavin transporter, member 3 (SLC52A3) from Ailuropoda melanoleuca (Giant panda).